The following is a 132-amino-acid chain: MGRDTIADIITYIRNADMDKKGTVRIPSTNITENIVKILLREGFIENVRKHRENNKDFLVLTLRHRRNRKRAYRNILKRISRPGLRIYSNSQRIPRISGGIGVVILSTSRGIMTDREARLERIGGEILFYIW.

This sequence belongs to the universal ribosomal protein uS8 family. As to quaternary structure, part of the 30S ribosomal subunit.

The protein resides in the plastid. It is found in the chloroplast. In terms of biological role, one of the primary rRNA binding proteins, it binds directly to 16S rRNA central domain where it helps coordinate assembly of the platform of the 30S subunit. The protein is Small ribosomal subunit protein uS8c (rps8) of Nymphaea alba (White water-lily).